The following is a 130-amino-acid chain: Small ribosomal subunit protein uS9 (130 aa).

Residues 109 to 130 are disordered; sequence RKKERKKYGQRAARARYQYSKR.

Belongs to the universal ribosomal protein uS9 family.

The chain is Small ribosomal subunit protein uS9 from Nitratidesulfovibrio vulgaris (strain DSM 19637 / Miyazaki F) (Desulfovibrio vulgaris).